The primary structure comprises 731 residues: Putative beta-galactosidase (731 aa).

The N-terminal stretch at 1–29 (MLCGKENNVMKMMLVYVFVLITLISCVYG) is a signal peptide. Catalysis depends on E187, which acts as the Proton donor. Residue E257 is the Nucleophile of the active site.

Belongs to the glycosyl hydrolase 35 family. In terms of tissue distribution, senescing flower petals.

The catalysed reaction is Hydrolysis of terminal non-reducing beta-D-galactose residues in beta-D-galactosides.. This chain is Putative beta-galactosidase (CARSR12), found in Dianthus caryophyllus (Carnation).